The chain runs to 425 residues: E3 ubiquitin-protein ligase TRIM31 (425 aa).

The RING-type zinc finger occupies 16–57 (CPICLDILQKPVTIDCGHNFCLKCITQIGETSCGFFKCPLCK). The B box-type zinc-finger motif lies at 90-131 (RKEATCPRHQEMFHYFCEDDGKFLCFVCRESKDHKSHNVSLI). Zn(2+) contacts are provided by Cys95, His98, Cys117, and His123. Coiled coils occupy residues 126-162 (HNVS…VKAQ) and 270-307 (LELE…DENR). Positions 328–360 (HKMNKTSEPGSSSAGGRTTSGPPNHHSSAPSHS) are disordered. The span at 336-360 (PGSSSAGGRTTSGPPNHHSSAPSHS) shows a compositional bias: low complexity.

The protein belongs to the TRIM/RBCC family. In terms of assembly, may form oligomers. Interacts with isoform p52shc of SHC1. In terms of processing, auto-ubiquitinated (in vitro). Up-regulated in gastric adenocarcinomas.

The protein resides in the cytoplasm. It localises to the mitochondrion. The catalysed reaction is S-ubiquitinyl-[E2 ubiquitin-conjugating enzyme]-L-cysteine + [acceptor protein]-L-lysine = [E2 ubiquitin-conjugating enzyme]-L-cysteine + N(6)-ubiquitinyl-[acceptor protein]-L-lysine.. The protein operates within protein modification; protein ubiquitination. E3 ubiquitin-protein ligase that acts as a regulator of antiviral immune response and inflammation by mediating ubiquitination of substrates. Acts as a regulator of innate immune defense against viruses by mediating 'Lys-63'-linked ubiquitination of MAVS, promoting MAVS polymerization and formation of three-stranded helical filaments on mitochondria. Acts as a negative regulator of the NLRP3 inflammasome by catalyzing 'Lys-48'-linked ubiquitination of NLRP3, leading to its degradation. Regulator of Src-induced anchorage independent cell growth. In Homo sapiens (Human), this protein is E3 ubiquitin-protein ligase TRIM31.